The chain runs to 795 residues: Protocadherin beta-4 (795 aa).

The signal sequence occupies residues 1 to 27; it reads MKKLGRIHPNRQVLAFILMVFLSQVRL. Residues 28–689 lie on the Extracellular side of the membrane; that stretch reads EPIRYSVLEE…SQADSLTVYL (662 aa). Cadherin domains follow at residues 34-132, 137-241, 246-346, 351-450, and 455-560; these read VLEE…SPVF, VLLK…APEF, YGVQ…PPEL, LTSS…APAF, and YTLF…SPFV. N-linked (GlcNAc...) asparagine glycosylation is present at N183. N-linked (GlcNAc...) asparagine glycosylation occurs at N417. N-linked (GlcNAc...) asparagine glycosylation is present at N566. The 104-residue stretch at 567-670 folds into the Cadherin 6 domain; the sequence is GSAPCTELVP…LVDGFSQPYL (104 aa). The helical transmembrane segment at 690-710 threads the bilayer; that stretch reads VVALASVSSLFLFSVLLFVAV. Residues 711–795 lie on the Cytoplasmic side of the membrane; it reads RLCRRSRAAS…PKFRNSLVFS (85 aa).

Its subcellular location is the cell membrane. Its function is as follows. Potential calcium-dependent cell-adhesion protein. May be involved in the establishment and maintenance of specific neuronal connections in the brain. The sequence is that of Protocadherin beta-4 (PCDHB4) from Pan troglodytes (Chimpanzee).